The sequence spans 149 residues: UPF0336 protein Lxx02810 (149 aa).

Belongs to the UPF0336 family.

The protein is UPF0336 protein Lxx02810 of Leifsonia xyli subsp. xyli (strain CTCB07).